The sequence spans 397 residues: Ribosomal RNA large subunit methyltransferase I (397 aa).

The region spanning 2–78 is the PUA domain; that stretch reads TPAIYLVKGR…EQEPIDRDFF (77 aa).

Belongs to the methyltransferase superfamily. RlmI family.

The protein resides in the cytoplasm. The enzyme catalyses cytidine(1962) in 23S rRNA + S-adenosyl-L-methionine = 5-methylcytidine(1962) in 23S rRNA + S-adenosyl-L-homocysteine + H(+). Functionally, specifically methylates the cytosine at position 1962 (m5C1962) of 23S rRNA. The polypeptide is Ribosomal RNA large subunit methyltransferase I (Vibrio cholerae serotype O1 (strain ATCC 39541 / Classical Ogawa 395 / O395)).